We begin with the raw amino-acid sequence, 364 residues long: Chorismate synthase (364 aa).

An NADP(+)-binding site is contributed by Arg48. Residues 126–128 (RSS), Gly288, 303–307 (KPIAS), and Arg329 contribute to the FMN site.

This sequence belongs to the chorismate synthase family. As to quaternary structure, homotetramer. FMNH2 serves as cofactor.

It carries out the reaction 5-O-(1-carboxyvinyl)-3-phosphoshikimate = chorismate + phosphate. It participates in metabolic intermediate biosynthesis; chorismate biosynthesis; chorismate from D-erythrose 4-phosphate and phosphoenolpyruvate: step 7/7. Catalyzes the anti-1,4-elimination of the C-3 phosphate and the C-6 proR hydrogen from 5-enolpyruvylshikimate-3-phosphate (EPSP) to yield chorismate, which is the branch point compound that serves as the starting substrate for the three terminal pathways of aromatic amino acid biosynthesis. This reaction introduces a second double bond into the aromatic ring system. This is Chorismate synthase from Desulfovibrio desulfuricans (strain ATCC 27774 / DSM 6949 / MB).